A 139-amino-acid chain; its full sequence is Hydrogenase maturation factor HypA (139 aa).

Histidine 2 serves as a coordination point for Ni(2+). The Zn(2+) site is built by cysteine 73, cysteine 76, cysteine 110, and cysteine 113.

This sequence belongs to the HypA/HybF family.

Involved in the maturation of [NiFe] hydrogenases. Required for nickel insertion into the metal center of the hydrogenase. This Pyrococcus abyssi (strain GE5 / Orsay) protein is Hydrogenase maturation factor HypA.